The primary structure comprises 131 residues: Small ribosomal subunit protein bS6 (131 aa).

A disordered region spans residues 98–131 (EASPMVKAKDERRERRDDFANETADDAEAGDSEE). Residues 104-116 (KAKDERRERRDDF) show a composition bias toward basic and acidic residues. Residues 120–131 (TADDAEAGDSEE) are compositionally biased toward acidic residues.

Belongs to the bacterial ribosomal protein bS6 family.

Its function is as follows. Binds together with bS18 to 16S ribosomal RNA. The polypeptide is Small ribosomal subunit protein bS6 (Cronobacter sakazakii (strain ATCC BAA-894) (Enterobacter sakazakii)).